We begin with the raw amino-acid sequence, 154 residues long: Myoglobin (154 aa).

The 147-residue stretch at 2 to 148 folds into the Globin domain; that stretch reads GLSDGEWQLV…FRKDMASNYK (147 aa). A Phosphoserine modification is found at serine 4. Histidine 65 serves as a coordination point for nitrite. Histidine 65 contacts O2. Threonine 68 bears the Phosphothreonine mark. Heme b is bound at residue histidine 94.

Belongs to the globin family. As to quaternary structure, monomeric.

It is found in the cytoplasm. Its subcellular location is the sarcoplasm. It carries out the reaction Fe(III)-heme b-[protein] + nitric oxide + H2O = Fe(II)-heme b-[protein] + nitrite + 2 H(+). It catalyses the reaction H2O2 + AH2 = A + 2 H2O. Monomeric heme protein which primary function is to store oxygen and facilitate its diffusion within muscle tissues. Reversibly binds oxygen through a pentacoordinated heme iron and enables its timely and efficient release as needed during periods of heightened demand. Depending on the oxidative conditions of tissues and cells, and in addition to its ability to bind oxygen, it also has a nitrite reductase activity whereby it regulates the production of bioactive nitric oxide. Under stress conditions, like hypoxia and anoxia, it also protects cells against reactive oxygen species thanks to its pseudoperoxidase activity. The polypeptide is Myoglobin (MB) (Pongo pygmaeus (Bornean orangutan)).